Consider the following 237-residue polypeptide: Sulfolipid-1 exporter Sap (237 aa).

The next 6 helical transmembrane spans lie at 5–25 (VLVL…VVLM), 38–58 (FLCG…VVLG), 66–86 (FSVA…AFAL), 141–161 (VSGL…AAIL), 171–191 (ALAV…PLVS), and 217–237 (DAAL…LSNL).

It belongs to the peptidoglycolipid addressing protein (GAP) (TC 2.A.116) family.

The protein localises to the cell inner membrane. Functionally, required for the transport across the inner membrane of sulfolipid-1 (SL-1), which is a major cell wall lipid of pathogenic mycobacteria. Could also transport SL1278 (2-palmitoyl-3-(C43)-phthioceranyl-alpha, alpha'-D-trehalose-2'-sulfate), which is the precursor of SL-1. May potentiate SL-1 levels and confer specificity for sulfolipids over structurally similar glycolipids. The chain is Sulfolipid-1 exporter Sap from Mycobacterium tuberculosis (strain ATCC 25618 / H37Rv).